A 470-amino-acid chain; its full sequence is Membrane-bound lytic murein transglycosylase F (470 aa).

The signal sequence occupies residues 1 to 24 (MPSLKTKGAAGKFASLLLVLALSA). Positions 25–262 (CSRPAPPPET…RALERYFGHV (238 aa)) are non-LT domain. The LT domain stretch occupies residues 263–470 (KRLGSSDILG…RGEDGLPPPG (208 aa)). Glutamate 309 is a catalytic residue.

This sequence in the N-terminal section; belongs to the bacterial solute-binding protein 3 family. In the C-terminal section; belongs to the transglycosylase Slt family.

Its subcellular location is the cell outer membrane. The enzyme catalyses Exolytic cleavage of the (1-&gt;4)-beta-glycosidic linkage between N-acetylmuramic acid (MurNAc) and N-acetylglucosamine (GlcNAc) residues in peptidoglycan, from either the reducing or the non-reducing ends of the peptidoglycan chains, with concomitant formation of a 1,6-anhydrobond in the MurNAc residue.. In terms of biological role, murein-degrading enzyme that degrades murein glycan strands and insoluble, high-molecular weight murein sacculi, with the concomitant formation of a 1,6-anhydromuramoyl product. Lytic transglycosylases (LTs) play an integral role in the metabolism of the peptidoglycan (PG) sacculus. Their lytic action creates space within the PG sacculus to allow for its expansion as well as for the insertion of various structures such as secretion systems and flagella. This Thiobacillus denitrificans (strain ATCC 25259 / T1) protein is Membrane-bound lytic murein transglycosylase F.